Here is a 405-residue protein sequence, read N- to C-terminus: Na(+)/H(+) antiporter NhaA 1 (405 aa).

The next 11 helical transmembrane spans lie at 20–40 (FVSD…AMIV), 68–88 (LHLW…GLEV), 105–125 (LPVL…VGVV), 134–154 (GWAI…GLLG), 163–183 (LFLL…IAAF), 186–206 (ANLK…MVGM), 214–234 (IWPY…SGVH), 263–283 (GLAP…NAGV), 301–321 (IAAG…VAAV), 334–354 (WIEI…SLFI), and 371–391 (IGIL…LRLT).

It belongs to the NhaA Na(+)/H(+) (TC 2.A.33) antiporter family.

It localises to the cell inner membrane. The enzyme catalyses Na(+)(in) + 2 H(+)(out) = Na(+)(out) + 2 H(+)(in). Its function is as follows. Na(+)/H(+) antiporter that extrudes sodium in exchange for external protons. This Erythrobacter litoralis (strain HTCC2594) protein is Na(+)/H(+) antiporter NhaA 1.